A 417-amino-acid chain; its full sequence is MLEQMGKQAKDAAFILAQLTTAEKNCALSIIAEQLEQQAPLILAENAKDIELAKQNGLSDALIDRLLLTQERLQGIANDVRHVISLADPVGKIIDGGTLDSGLKIERVRTPLGVIGTIYEARPNVTIDVASLCLKTGNAVILRGGKETQFSNKILIEVVQNALEQAGLPKFAVQAITDPNRELVMQLLKLDRYVDMIIPRGGSGLHELCKQHSTIPVIVGGVGVCHTFVEKSADQNKAIFVIDNAKTQRPSTCNTLETLLVQHSIAEEFLPKLVSHLSAKNVKYHAKSTALNILKQAGANVCEVTEKELRKEWGSLDLNVVVVEDIHAAIEHIRQYGTQHSESILTSSQSLARQFINQVDAAAVYVNASTRFTDGGQFGLGAEVAVSTQKLHARGPMGLEALTSYKWVCEGEYTVRK.

The protein belongs to the gamma-glutamyl phosphate reductase family.

The protein localises to the cytoplasm. The enzyme catalyses L-glutamate 5-semialdehyde + phosphate + NADP(+) = L-glutamyl 5-phosphate + NADPH + H(+). It participates in amino-acid biosynthesis; L-proline biosynthesis; L-glutamate 5-semialdehyde from L-glutamate: step 2/2. Its function is as follows. Catalyzes the NADPH-dependent reduction of L-glutamate 5-phosphate into L-glutamate 5-semialdehyde and phosphate. The product spontaneously undergoes cyclization to form 1-pyrroline-5-carboxylate. This chain is Gamma-glutamyl phosphate reductase, found in Haemophilus influenzae (strain ATCC 51907 / DSM 11121 / KW20 / Rd).